Here is a 678-residue protein sequence, read N- to C-terminus: ABC transporter G family member 13 (678 aa).

An ABC transporter domain is found at 10–254 (VAWEDLTVVI…FGEAGFPCPS (245 aa)). 48-55 (GPSGSGKS) contacts ATP. Residues 355 to 567 (KQLRILTQRS…ALQGAYKNEM (213 aa)) enclose the ABC transmembrane type-2 domain. 6 helical membrane passes run 374–394 (YYWM…SIFF), 409–429 (CGGF…QSFI), 446–466 (VAVY…LMCL), 490–510 (LDLI…ASVV), 513–533 (FLMG…SAGF), and 602–622 (LDLA…FAIL). Residue S658 is modified to Phosphoserine.

This sequence belongs to the ABC transporter superfamily. ABCG family. Eye pigment precursor importer (TC 3.A.1.204) subfamily.

The protein localises to the membrane. This chain is ABC transporter G family member 13 (ABCG13), found in Arabidopsis thaliana (Mouse-ear cress).